The primary structure comprises 141 residues: Small ribosomal subunit protein uS19 (141 aa).

The protein belongs to the universal ribosomal protein uS19 family.

Its function is as follows. Protein S19 forms a complex with S13 that binds strongly to the 16S ribosomal RNA. The chain is Small ribosomal subunit protein uS19 from Thermofilum pendens (strain DSM 2475 / Hrk 5).